Reading from the N-terminus, the 315-residue chain is Large ribosomal subunit protein uL29m (315 aa).

Belongs to the universal ribosomal protein uL29 family. Component of the mitochondrial large ribosomal subunit. Mature mitochondrial ribosomes consist of a small (37S) and a large (54S) subunit. The 37S subunit contains at least 33 different proteins and 1 molecule of RNA (15S). The 54S subunit contains at least 45 different proteins and 1 molecule of RNA (21S).

It localises to the mitochondrion. The protein is Large ribosomal subunit protein uL29m (MRPL4) of Candida glabrata (strain ATCC 2001 / BCRC 20586 / JCM 3761 / NBRC 0622 / NRRL Y-65 / CBS 138) (Yeast).